Here is a 339-residue protein sequence, read N- to C-terminus: Ketol-acid reductoisomerase (NADP(+)) (339 aa).

A KARI N-terminal Rossmann domain is found at 1-182 (MRVYYDRDAD…GGGRAGIIET (182 aa)). NADP(+) is bound by residues 24–27 (YGSQ), Arg48, Ser51, Thr53, and 83–86 (DELQ). Residue His108 is part of the active site. Gly134 serves as a coordination point for NADP(+). Residues 183-328 (TFREECETDL…AKLREMMPWI (146 aa)) form the KARI C-terminal knotted domain. Residues Asp191, Glu195, Glu227, and Glu231 each coordinate Mg(2+). Substrate is bound at residue Ser252.

It belongs to the ketol-acid reductoisomerase family. Mg(2+) serves as cofactor.

The catalysed reaction is (2R)-2,3-dihydroxy-3-methylbutanoate + NADP(+) = (2S)-2-acetolactate + NADPH + H(+). It carries out the reaction (2R,3R)-2,3-dihydroxy-3-methylpentanoate + NADP(+) = (S)-2-ethyl-2-hydroxy-3-oxobutanoate + NADPH + H(+). It participates in amino-acid biosynthesis; L-isoleucine biosynthesis; L-isoleucine from 2-oxobutanoate: step 2/4. The protein operates within amino-acid biosynthesis; L-valine biosynthesis; L-valine from pyruvate: step 2/4. Its function is as follows. Involved in the biosynthesis of branched-chain amino acids (BCAA). Catalyzes an alkyl-migration followed by a ketol-acid reduction of (S)-2-acetolactate (S2AL) to yield (R)-2,3-dihydroxy-isovalerate. In the isomerase reaction, S2AL is rearranged via a Mg-dependent methyl migration to produce 3-hydroxy-3-methyl-2-ketobutyrate (HMKB). In the reductase reaction, this 2-ketoacid undergoes a metal-dependent reduction by NADPH to yield (R)-2,3-dihydroxy-isovalerate. The protein is Ketol-acid reductoisomerase (NADP(+)) of Rhodopseudomonas palustris (strain BisA53).